Reading from the N-terminus, the 354-residue chain is MEKRIVCLAGDGVGPEVMESAKEVLHMVERLYGHHFHLQDEHFGGVAIDLTGQPLPQRTLAACLASDAVLLGAVGGPRWDGAKERPEKGLLALRKGLGVFANVRPVTVESATAHLSPLKKADEIDFVVVRELTGGIYFSYPKERTDEVATDTLTYHRHEIERIVSCAFQLASKRKKKVTSIDKANVLESSKLWRIVTEEVALRYPDVELEHILVDAAAMELIRNPGRFDVIVTENLFGDILSDEASVLAGSLGMLPSASHAEKGPSLYEPIHGSAPDIAGKNKANPIAMMRSVAMMLGQSFGLTREGCAIEEAISAVLKSGKCTADIGGTETTTSFTKAVMQEMEEQALVGRGR.

G76–E87 contributes to the NAD(+) binding site. Substrate contacts are provided by R94, R104, R130, and D215. Positions 215, 239, and 243 each coordinate Mg(2+). G273–N285 contributes to the NAD(+) binding site.

Belongs to the isocitrate and isopropylmalate dehydrogenases family. LeuB type 1 subfamily. As to quaternary structure, homodimer. It depends on Mg(2+) as a cofactor. The cofactor is Mn(2+).

It is found in the cytoplasm. The enzyme catalyses (2R,3S)-3-isopropylmalate + NAD(+) = 4-methyl-2-oxopentanoate + CO2 + NADH. It functions in the pathway amino-acid biosynthesis; L-leucine biosynthesis; L-leucine from 3-methyl-2-oxobutanoate: step 3/4. In terms of biological role, catalyzes the oxidation of 3-carboxy-2-hydroxy-4-methylpentanoate (3-isopropylmalate) to 3-carboxy-4-methyl-2-oxopentanoate. The product decarboxylates to 4-methyl-2 oxopentanoate. This chain is 3-isopropylmalate dehydrogenase, found in Bacillus anthracis.